The primary structure comprises 91 residues: uncharacterized protein (91 aa).

This sequence belongs to the UPF0440 family.

This is an uncharacterized protein from Methanothermobacter thermautotrophicus (strain ATCC 29096 / DSM 1053 / JCM 10044 / NBRC 100330 / Delta H) (Methanobacterium thermoautotrophicum).